A 285-amino-acid chain; its full sequence is (2Z,6Z)-farnesyl diphosphate synthase CPT6, chloroplastic (285 aa).

The N-terminal 30 residues, 1 to 30 (MNSLFVGRPIVKSSYNVYTLPSSICGGHFF), are a transit peptide targeting the chloroplast. Residue Asp65 is part of the active site.

This sequence belongs to the UPP synthase family. Requires Mg(2+) as cofactor. As to expression, expressed in roots and red fruits.

It is found in the plastid. The protein localises to the chloroplast. It carries out the reaction 2 isopentenyl diphosphate + dimethylallyl diphosphate = (2Z,6Z)-farnesyl diphosphate + 2 diphosphate. It catalyses the reaction isopentenyl diphosphate + dimethylallyl diphosphate = neryl diphosphate + diphosphate. The catalysed reaction is neryl diphosphate + isopentenyl diphosphate = (2Z,6Z)-farnesyl diphosphate + diphosphate. Uses neryl diphosphate to catalyze the cis-prenyl chain elongation and produce the 15 carbon product (2Z,6Z)-farnesyl diphosphate. This is (2Z,6Z)-farnesyl diphosphate synthase CPT6, chloroplastic from Solanum lycopersicum (Tomato).